Here is a 103-residue protein sequence, read N- to C-terminus: Pyrimidine/purine nucleoside phosphorylase (103 aa).

This sequence belongs to the nucleoside phosphorylase PpnP family.

It carries out the reaction a purine D-ribonucleoside + phosphate = a purine nucleobase + alpha-D-ribose 1-phosphate. The enzyme catalyses adenosine + phosphate = alpha-D-ribose 1-phosphate + adenine. It catalyses the reaction cytidine + phosphate = cytosine + alpha-D-ribose 1-phosphate. The catalysed reaction is guanosine + phosphate = alpha-D-ribose 1-phosphate + guanine. It carries out the reaction inosine + phosphate = alpha-D-ribose 1-phosphate + hypoxanthine. The enzyme catalyses thymidine + phosphate = 2-deoxy-alpha-D-ribose 1-phosphate + thymine. It catalyses the reaction uridine + phosphate = alpha-D-ribose 1-phosphate + uracil. The catalysed reaction is xanthosine + phosphate = alpha-D-ribose 1-phosphate + xanthine. Functionally, catalyzes the phosphorolysis of diverse nucleosides, yielding D-ribose 1-phosphate and the respective free bases. Can use uridine, adenosine, guanosine, cytidine, thymidine, inosine and xanthosine as substrates. Also catalyzes the reverse reactions. This chain is Pyrimidine/purine nucleoside phosphorylase, found in Shewanella sp. (strain W3-18-1).